A 95-amino-acid chain; its full sequence is Large ribosomal subunit protein bL25 (95 aa).

This sequence belongs to the bacterial ribosomal protein bL25 family. In terms of assembly, part of the 50S ribosomal subunit; part of the 5S rRNA/L5/L18/L25 subcomplex. Contacts the 5S rRNA. Binds to the 5S rRNA independently of L5 and L18.

Its function is as follows. This is one of the proteins that binds to the 5S RNA in the ribosome where it forms part of the central protuberance. This chain is Large ribosomal subunit protein bL25, found in Shewanella putrefaciens (strain CN-32 / ATCC BAA-453).